Consider the following 460-residue polypeptide: Bifunctional protein GlmU (460 aa).

Residues 1–229 are pyrophosphorylase; that stretch reads MTNYAIILAA…FNESLGVNDR (229 aa). Residues 8–11, Lys22, Gln72, and 77–78 each bind UDP-N-acetyl-alpha-D-glucosamine; these read LAAG and GT. Asp102 provides a ligand contact to Mg(2+). Positions 139, 154, 169, and 227 each coordinate UDP-N-acetyl-alpha-D-glucosamine. Position 227 (Asn227) interacts with Mg(2+). The tract at residues 230 to 250 is linker; the sequence is VALATAETVMRQRITQKHMVN. An N-acetyltransferase region spans residues 251–460; it reads GVTFQNPETV…RLAHHPSRSK (210 aa). Positions 332 and 350 each coordinate UDP-N-acetyl-alpha-D-glucosamine. Catalysis depends on His362, which acts as the Proton acceptor. The UDP-N-acetyl-alpha-D-glucosamine site is built by Tyr365 and Asn376. Acetyl-CoA-binding positions include Ala379, 385–386, Ser404, Ala422, and Arg439; that span reads NY.

It in the N-terminal section; belongs to the N-acetylglucosamine-1-phosphate uridyltransferase family. This sequence in the C-terminal section; belongs to the transferase hexapeptide repeat family. As to quaternary structure, homotrimer. Requires Mg(2+) as cofactor.

It is found in the cytoplasm. It carries out the reaction alpha-D-glucosamine 1-phosphate + acetyl-CoA = N-acetyl-alpha-D-glucosamine 1-phosphate + CoA + H(+). The enzyme catalyses N-acetyl-alpha-D-glucosamine 1-phosphate + UTP + H(+) = UDP-N-acetyl-alpha-D-glucosamine + diphosphate. It functions in the pathway nucleotide-sugar biosynthesis; UDP-N-acetyl-alpha-D-glucosamine biosynthesis; N-acetyl-alpha-D-glucosamine 1-phosphate from alpha-D-glucosamine 6-phosphate (route II): step 2/2. It participates in nucleotide-sugar biosynthesis; UDP-N-acetyl-alpha-D-glucosamine biosynthesis; UDP-N-acetyl-alpha-D-glucosamine from N-acetyl-alpha-D-glucosamine 1-phosphate: step 1/1. Its pathway is bacterial outer membrane biogenesis; LPS lipid A biosynthesis. Catalyzes the last two sequential reactions in the de novo biosynthetic pathway for UDP-N-acetylglucosamine (UDP-GlcNAc). The C-terminal domain catalyzes the transfer of acetyl group from acetyl coenzyme A to glucosamine-1-phosphate (GlcN-1-P) to produce N-acetylglucosamine-1-phosphate (GlcNAc-1-P), which is converted into UDP-GlcNAc by the transfer of uridine 5-monophosphate (from uridine 5-triphosphate), a reaction catalyzed by the N-terminal domain. This is Bifunctional protein GlmU from Streptococcus pyogenes serotype M28 (strain MGAS6180).